The chain runs to 350 residues: S-adenosylmethionine:tRNA ribosyltransferase-isomerase (350 aa).

This sequence belongs to the QueA family. Monomer.

It localises to the cytoplasm. The enzyme catalyses 7-aminomethyl-7-carbaguanosine(34) in tRNA + S-adenosyl-L-methionine = epoxyqueuosine(34) in tRNA + adenine + L-methionine + 2 H(+). It functions in the pathway tRNA modification; tRNA-queuosine biosynthesis. Its function is as follows. Transfers and isomerizes the ribose moiety from AdoMet to the 7-aminomethyl group of 7-deazaguanine (preQ1-tRNA) to give epoxyqueuosine (oQ-tRNA). The chain is S-adenosylmethionine:tRNA ribosyltransferase-isomerase from Bacillus cytotoxicus (strain DSM 22905 / CIP 110041 / 391-98 / NVH 391-98).